Reading from the N-terminus, the 212-residue chain is Thymidylate kinase (212 aa).

Gly-11–Ser-18 is an ATP binding site.

This sequence belongs to the thymidylate kinase family.

The enzyme catalyses dTMP + ATP = dTDP + ADP. In terms of biological role, phosphorylation of dTMP to form dTDP in both de novo and salvage pathways of dTTP synthesis. In Chromohalobacter salexigens (strain ATCC BAA-138 / DSM 3043 / CIP 106854 / NCIMB 13768 / 1H11), this protein is Thymidylate kinase.